The primary structure comprises 113 residues: MVAAKKQKKTIESINSRLALVMKSGKYCLGYKQTLKTLRQGKAKLVIIAKNAPPLRKSEIEYYALLAKTGVHHYSGNNIELGTACGKYYRVCTLAITDPGDSDIITTLPESQV.

This sequence belongs to the eukaryotic ribosomal protein eL30 family.

In Spodoptera frugiperda (Fall armyworm), this protein is Large ribosomal subunit protein eL30 (RpL30).